Here is a 277-residue protein sequence, read N- to C-terminus: Release factor glutamine methyltransferase (277 aa).

Residues 120-124 (GTGSG), D143, W171, and N186 contribute to the S-adenosyl-L-methionine site. Substrate is bound at residue 186-189 (NPPY).

It belongs to the protein N5-glutamine methyltransferase family. PrmC subfamily.

It carries out the reaction L-glutaminyl-[peptide chain release factor] + S-adenosyl-L-methionine = N(5)-methyl-L-glutaminyl-[peptide chain release factor] + S-adenosyl-L-homocysteine + H(+). Methylates the class 1 translation termination release factors RF1/PrfA and RF2/PrfB on the glutamine residue of the universally conserved GGQ motif. The chain is Release factor glutamine methyltransferase from Coxiella burnetii (strain RSA 493 / Nine Mile phase I).